Consider the following 120-residue polypeptide: Inner membrane protein YidG (120 aa).

The Cytoplasmic portion of the chain corresponds to 1–21 (MPDSRKARRIADPGLQPERTS). Residues 22-39 (LAWFRTMLGYGALMALAI) form a helical membrane-spanning segment. Over 40 to 48 (KHNWHQAGM) the chain is Periplasmic. The chain crosses the membrane as a helical span at residues 49 to 68 (LFWISIGILAIVALILWHYT). At 69–90 (RNRNLMDVTNSDFSQFHVVRDK) the chain is on the cytoplasmic side. Residues 91–113 (FLISLAVLSLAILFAVTHIHQLI) traverse the membrane as a helical segment. Residues 114-120 (VFIERVA) are Periplasmic-facing.

It is found in the cell inner membrane. This is Inner membrane protein YidG (yidG) from Escherichia coli O157:H7.